The chain runs to 209 residues: Uracil phosphoribosyltransferase (209 aa).

5-phospho-alpha-D-ribose 1-diphosphate contacts are provided by residues R79, R104, and 131–139; that span reads DPMLATGGS. Uracil contacts are provided by residues I194 and 199–201; that span reads GDA. D200 is a 5-phospho-alpha-D-ribose 1-diphosphate binding site.

This sequence belongs to the UPRTase family. Mg(2+) serves as cofactor.

The enzyme catalyses UMP + diphosphate = 5-phospho-alpha-D-ribose 1-diphosphate + uracil. The protein operates within pyrimidine metabolism; UMP biosynthesis via salvage pathway; UMP from uracil: step 1/1. Its activity is regulated as follows. Allosterically activated by GTP. Functionally, catalyzes the conversion of uracil and 5-phospho-alpha-D-ribose 1-diphosphate (PRPP) to UMP and diphosphate. The chain is Uracil phosphoribosyltransferase from Symbiobacterium thermophilum (strain DSM 24528 / JCM 14929 / IAM 14863 / T).